A 182-amino-acid polypeptide reads, in one-letter code: Inner membrane assembly complex subunit 17 (182 aa).

The N-terminal 45 residues, 1 to 45 (MLKRRSNALITLSRTKLFPITTVAYYHRRLLNQQRRAVSTSPKKE), are a transit peptide targeting the mitochondrion. Topologically, residues 46-107 (IKSLEDLANL…EIPVKRFIRP (62 aa)) are mitochondrial matrix. Residues 108-127 (LWMFILMGSSVYLLLHFSWW) form a helical membrane-spanning segment. A coiled-coil region spans residues 128-158 (KLEHEERESQLKKEVEILEHQLNELIVQDKT). The Mitochondrial intermembrane portion of the chain corresponds to 128–182 (KLEHEERESQLKKEVEILEHQLNELIVQDKTHNTSRGKGSNESTHMKPWYRRWFW).

The protein belongs to the INA17 family. As to quaternary structure, component of the inner membrane assembly (INA) complex, composed of INA17 and INA22. Interacts with a subset of F(1)F(0)-ATP synthase subunits of the F(1)-domain and the peripheral stalk.

The protein resides in the mitochondrion inner membrane. Functionally, component of the INA complex (INAC) that promotes the biogenesis of mitochondrial F(1)F(0)-ATP synthase. INAC facilitates the assembly of the peripheral stalk and promotes the assembly of the catalytic F(1)-domain with the membrane-embedded F(0)-domain. The chain is Inner membrane assembly complex subunit 17 from Saccharomyces cerevisiae (strain RM11-1a) (Baker's yeast).